Reading from the N-terminus, the 186-residue chain is uncharacterized protein (186 aa).

2 consecutive CBS domains span residues 10–69 (IMKK…KLPP) and 77–133 (ISSG…IIST).

This is an uncharacterized protein from Methanocaldococcus jannaschii (strain ATCC 43067 / DSM 2661 / JAL-1 / JCM 10045 / NBRC 100440) (Methanococcus jannaschii).